The following is an 82-amino-acid chain: MRLSYVSLTLAIIFVMAIVHAPETEAKAYPEADAVGEASAVGEADAVGVADPGVGSLLAKAALKILKIVAPAAAEVIANKIG.

An N-terminal signal peptide occupies residues 1–26 (MRLSYVSLTLAIIFVMAIVHAPETEA). Residues 27-52 (KAYPEADAVGEASAVGEADAVGVADP) constitute a propeptide that is removed on maturation. Ile-81 carries the post-translational modification Isoleucine amide.

It belongs to the formicidae venom precursor-01 superfamily. As to expression, expressed by the venom gland.

It localises to the secreted. In terms of biological role, induces paralysis 5 minutes after injection into blowflies (L.caesar). In most cases is not lethal 24 hours after injection, but paralysis is irreversible. May have antimicrobial properties, like most ant linear peptides. In Manica rubida (European giant red ant), this protein is U10-myrmicitoxin-Mri1c.